The chain runs to 183 residues: Peptidyl-tRNA hydrolase (183 aa).

Tyr14 serves as a coordination point for tRNA. The active-site Proton acceptor is the His19. Tyr55 and Asn57 together coordinate tRNA.

Belongs to the PTH family. Monomer.

The protein resides in the cytoplasm. It carries out the reaction an N-acyl-L-alpha-aminoacyl-tRNA + H2O = an N-acyl-L-amino acid + a tRNA + H(+). Hydrolyzes ribosome-free peptidyl-tRNAs (with 1 or more amino acids incorporated), which drop off the ribosome during protein synthesis, or as a result of ribosome stalling. In terms of biological role, catalyzes the release of premature peptidyl moieties from peptidyl-tRNA molecules trapped in stalled 50S ribosomal subunits, and thus maintains levels of free tRNAs and 50S ribosomes. This Thermus thermophilus (strain ATCC BAA-163 / DSM 7039 / HB27) protein is Peptidyl-tRNA hydrolase.